The sequence spans 382 residues: Opsin-VA (382 aa).

Over 1-35 (MELFPVAVNGVSHAEDPFSGPLTFIAPWNYKVLAT) the chain is Extracellular. The helical transmembrane segment at 36–56 (LMFVVTAASLSENFAVMLVTF) threads the bilayer. Topologically, residues 57-67 (RFTQLRKPLNY) are cytoplasmic. Residues 68 to 88 (IIVNLSLADFLVSLTGGTISF) traverse the membrane as a helical segment. The Extracellular portion of the chain corresponds to 89-103 (LTNYHGYFFLGKWAC). A disulfide bond links C103 and C180. Residues 104–124 (VLEGFAVTYFGIVALWSLAVL) traverse the membrane as a helical segment. Topologically, residues 125-147 (AFERFFVICRPLGNIRLRGKHAA) are cytoplasmic. Residues 148–168 (LGLLFVWTFSFIWTIPPVLGW) form a helical membrane-spanning segment. Residues 169-193 (SSYTVSKIGTTCEPNWYSGNFHDHT) lie on the Extracellular side of the membrane. A helical membrane pass occupies residues 194 to 214 (FIIAFFITCFILPLGVIVVCY). Topologically, residues 215 to 244 (CKLIKKLRKVSNTHGRLGNARKPERQVTRM) are cytoplasmic. A helical transmembrane segment spans residues 245-265 (VVVMIVAFMVAWTPYAAFSIV). At 266 to 279 (VTAHPSIHLDPRLA) the chain is on the extracellular side. A helical membrane pass occupies residues 280–300 (AAPAFFSKTAAVYNPVIYVFM). K287 is modified (N6-(retinylidene)lysine). Residues 301-382 (NKQFRKCLVQ…PIPENKVCPM (82 aa)) are Cytoplasmic-facing. The span at 330-346 (RQGMTNESHTGEMSTIA) shows a compositional bias: polar residues. A disordered region spans residues 330 to 371 (RQGMTNESHTGEMSTIASRIPKDGSIPEKTQEHPGERRSLAH). Residues 349–368 (IPKDGSIPEKTQEHPGERRS) are compositionally biased toward basic and acidic residues.

Belongs to the G-protein coupled receptor 1 family. Opsin subfamily. As to expression, expressed in a subset of retinal horizontal cells as well as in retinal ganglion cells.

It localises to the membrane. This is Opsin-VA from Rutilus rutilus (Roach).